We begin with the raw amino-acid sequence, 134 residues long: UPF0357 protein AAL017W (134 aa).

The signal sequence occupies residues 1-23 (MFGLISLWHLFWLAVMAGILVVA).

It belongs to the UPF0357 family.

The polypeptide is UPF0357 protein AAL017W (Eremothecium gossypii (strain ATCC 10895 / CBS 109.51 / FGSC 9923 / NRRL Y-1056) (Yeast)).